A 98-amino-acid polypeptide reads, in one-letter code: NADH-ubiquinone oxidoreductase chain 4L (98 aa).

3 helical membrane-spanning segments follow: residues 1–21 (MYSS…VNLI), 27–47 (FLMT…FVPI), and 61–81 (VILL…MVLM).

It belongs to the complex I subunit 4L family.

The protein resides in the mitochondrion membrane. It carries out the reaction a ubiquinone + NADH + 5 H(+)(in) = a ubiquinol + NAD(+) + 4 H(+)(out). In terms of biological role, core subunit of the mitochondrial membrane respiratory chain NADH dehydrogenase (Complex I) that is believed to belong to the minimal assembly required for catalysis. Complex I functions in the transfer of electrons from NADH to the respiratory chain. The immediate electron acceptor for the enzyme is believed to be ubiquinone. The protein is NADH-ubiquinone oxidoreductase chain 4L (ND4L) of Lumbricus terrestris (Common earthworm).